Reading from the N-terminus, the 311-residue chain is Pyrimidine-specific ribonucleoside hydrolase RihA (311 aa).

The active site involves H240.

The protein belongs to the IUNH family. RihA subfamily.

Functionally, hydrolyzes with equal efficiency cytidine or uridine to ribose and cytosine or uracil, respectively. The polypeptide is Pyrimidine-specific ribonucleoside hydrolase RihA (Escherichia coli O17:K52:H18 (strain UMN026 / ExPEC)).